Consider the following 333-residue polypeptide: D-threonate 4-phosphate dehydrogenase (333 aa).

Substrate is bound by residues His140 and Thr141. Residues His170, His214, and His270 each coordinate a divalent metal cation. Substrate is bound by residues Lys278, Asn287, and Arg296.

This sequence belongs to the PdxA family. PdxA2 subfamily. As to quaternary structure, homodimer. Requires a divalent metal cation as cofactor.

The enzyme catalyses 4-O-phospho-D-threonate + NAD(+) = dihydroxyacetone phosphate + CO2 + NADH. In terms of biological role, catalyzes the NAD-dependent oxidation and subsequent decarboxylation of D-threonate 4-phosphate to produce dihydroxyacetone phosphate (DHAP). Can also use 4-hydroxy-L-threonine 4-phosphate as substrate. This chain is D-threonate 4-phosphate dehydrogenase, found in Cupriavidus necator (strain ATCC 17699 / DSM 428 / KCTC 22496 / NCIMB 10442 / H16 / Stanier 337) (Ralstonia eutropha).